The chain runs to 860 residues: Pentatricopeptide repeat-containing protein At2g40720 (860 aa).

PPR repeat units follow at residues 59–93, 94–124, 132–166, 167–203, 204–234, 236–270, 271–305, 306–340, 341–371, 372–406, 407–437, 438–472, 475–509, 510–540, 541–575, 576–610, 611–641, 642–676, 677–707, and 713–743; these read SVFTFPSLLKACSALTNLSYGKTIHGSVVVLGWRY, DPFIATSLVNMYVKCGFLDYAVQVFDGWSQS, DVTVWNSMIDGYFKFRRFKEGVGCFRRMLVFGVRP, DAFSLSIVVSVMCKEGNFRREEGKQIHGFMLRNSLDT, DSFLKTALIDMYFKFGLSIDAWRVFVEIEDK, NVVLWNVMIVGFGGSGICESSLDLYMLAKNNSVKL, VSTSFTGALGACSQSENSGFGRQIHCDVVKMGLHN, DPYVCTSLLSMYSKCGMVGEAETVFSCVVDKRLEI, WNAMVAAYAENDYGYSALDLFGFMRQKSVLP, DSFTLSNVISCCSVLGLYNYGKSVHAELFKRPIQS, TSTIESALLTLYSKCGCDPDAYLVFKSMEEK, DMVAWGSLISGLCKNGKFKEALKVFGDMKDDDDSL, DSDIMTSVTNACAGLEALRFGLQVHGSMIKTGLVL, NVFVGSSLIDLYSKCGLPEMALKVFTSMSTE, NMVAWNSMISCYSRNNLPELSIDLFNLMLSQGIFP, DSVSITSVLVAISSTASLLKGKSLHGYTLRLGIPS, DTHLKNALIDMYVKCGFSKYAENIFKKMQHK, SLITWNLMIYGYGSHGDCITALSLFDEMKKAGESP, DDVTFLSLISACNHSGFVEEGKNIFEFMKQD, and NMEHYANMVDLLGRAGLLEEAYSFIKAMPIE. The segment at 748–823 is type E motif; sequence IWLCLLSASR…QPGCSWIEVS (76 aa). The type E(+) motif stretch occupies residues 824–854; the sequence is DRTNVFFSGGSSSPMKAEIFNVLNRLKSNMV.

Belongs to the PPR family. PCMP-E subfamily.

The sequence is that of Pentatricopeptide repeat-containing protein At2g40720 (PCMP-E26) from Arabidopsis thaliana (Mouse-ear cress).